Reading from the N-terminus, the 360-residue chain is Serine/threonine-protein kinase SRK2H (360 aa).

The Protein kinase domain occupies 4 to 260 (YEVVKDLGAG…LKEIKKHPWY (257 aa)). Residues 10–18 (LGAGNFGVA) and Lys-33 each bind ATP. Asp-123 functions as the Proton acceptor in the catalytic mechanism. Positions 298–360 (EARNPAPSSN…AHSCQEPPKA (63 aa)) are disordered. Over residues 313–343 (DDDEEDVEDEVEEEEEEEEEEEEEEEEEEDE) the composition is skewed to acidic residues. Positions 344–360 (YEKHVKEAHSCQEPPKA) are enriched in basic and acidic residues.

Belongs to the protein kinase superfamily. Ser/Thr protein kinase family. In terms of tissue distribution, expressed in seedlings.

It catalyses the reaction L-seryl-[protein] + ATP = O-phospho-L-seryl-[protein] + ADP + H(+). The enzyme catalyses L-threonyl-[protein] + ATP = O-phospho-L-threonyl-[protein] + ADP + H(+). In Arabidopsis thaliana (Mouse-ear cress), this protein is Serine/threonine-protein kinase SRK2H (SRK2H).